Reading from the N-terminus, the 346-residue chain is Queuosine 5'-phosphate N-glycosylase/hydrolase (346 aa).

Queuine contacts are provided by histidine 49, phenylalanine 243, aspartate 245, aspartate 310, and aspartate 315. Aspartate 245 acts as the Nucleophile or transition state stabilizer in catalysis.

It belongs to the QNG1 protein family.

It carries out the reaction queuosine 5'-phosphate + H2O = queuine + D-ribose 5-phosphate. Functionally, catalyzes the hydrolysis of queuosine 5'-phosphate, releasing the nucleobase queuine (q). Is required for salvage of queuine from exogenous queuosine (Q) that is imported and then converted to queuosine 5'-phosphate intracellularly. The sequence is that of Queuosine 5'-phosphate N-glycosylase/hydrolase from Schizosaccharomyces pombe (strain 972 / ATCC 24843) (Fission yeast).